Consider the following 252-residue polypeptide: Probable transcriptional regulatory protein Fnod_1106 (252 aa).

This sequence belongs to the TACO1 family.

It localises to the cytoplasm. This chain is Probable transcriptional regulatory protein Fnod_1106, found in Fervidobacterium nodosum (strain ATCC 35602 / DSM 5306 / Rt17-B1).